The primary structure comprises 364 residues: Transcription elongation factor, mitochondrial (364 aa).

A mitochondrion-targeting transit peptide spans Met1–Lys39.

Belongs to the TEFM family. In terms of assembly, interacts with POLRMT.

It localises to the mitochondrion matrix. It is found in the mitochondrion nucleoid. Its function is as follows. Transcription elongation factor which increases mitochondrial RNA polymerase processivity. Regulates transcription of the mitochondrial genome, including genes important for the oxidative phosphorylation machinery. This Mus musculus (Mouse) protein is Transcription elongation factor, mitochondrial (Tefm).